The sequence spans 1861 residues: Amylopullulanase (1861 aa).

An N-terminal signal peptide occupies residues 1–35; the sequence is MNKKLFTNRFISFNMSLLLVLTAVFSSIPLHSVHA. Ca(2+) contacts are provided by aspartate 248, asparagine 250, aspartate 288, aspartate 343, asparagine 401, aspartate 403, asparagine 406, aspartate 407, and aspartate 453. Residues histidine 526 and arginine 626 each contribute to the substrate site. Aspartate 628 serves as the catalytic Nucleophile. Catalysis depends on glutamate 657, which acts as the Proton donor. Substrate-binding positions include 733-734, aspartate 793, and arginine 797; that span reads HD. Fibronectin type-III domains follow at residues 929 to 1021 and 1158 to 1252; these read APQA…AYPI and KPTA…VVPI. A CBM20 domain is found at 1246–1354; the sequence is KPDVVPIKVI…INDTVYRWRD (109 aa). The interval 1448–1486 is disordered; it reads QENNSGSGTGNNNTSTSGSNSSSTGSGSTGSTSITSNIS. The segment covering 1450–1486 has biased composition (low complexity); it reads NNSGSGTGNNNTSTSGSNSSSTGSGSTGSTSITSNIS. 3 SLH domains span residues 1677-1740, 1741-1799, and 1802-1861; these read EYDK…YSGE, FSDV…KEEN, and ATTF…SGNI.

It belongs to the glycosyl hydrolase 13 family. Ca(2+) serves as cofactor. In terms of processing, glycosylated.

It is found in the secreted. The protein localises to the cell wall. It carries out the reaction Endohydrolysis of (1-&gt;4)-alpha-D-glucosidic linkages in polysaccharides containing three or more (1-&gt;4)-alpha-linked D-glucose units.. The enzyme catalyses Hydrolysis of (1-&gt;6)-alpha-D-glucosidic linkages in pullulan, amylopectin and glycogen, and in the alpha- and beta-limit dextrins of amylopectin and glycogen.. The polypeptide is Amylopullulanase (amyB) (Thermoanaerobacterium thermosulfurigenes (Clostridium thermosulfurogenes)).